The following is a 337-amino-acid chain: Inositol 2-dehydrogenase 1 (337 aa).

Belongs to the Gfo/Idh/MocA family. Homotetramer.

The catalysed reaction is myo-inositol + NAD(+) = scyllo-inosose + NADH + H(+). Involved in the oxidation of myo-inositol (MI) to 2-keto-myo-inositol (2KMI or 2-inosose). This chain is Inositol 2-dehydrogenase 1, found in Saccharopolyspora erythraea (strain ATCC 11635 / DSM 40517 / JCM 4748 / NBRC 13426 / NCIMB 8594 / NRRL 2338).